We begin with the raw amino-acid sequence, 205 residues long: Nitrophorin-4 (205 aa).

Positions 1-21 (MKSYTSLLAVAILCLFGGVNG) are cleaved as a signal peptide. 2 cysteine pairs are disulfide-bonded: C23–C143 and C62–C192. A heme-binding site is contributed by H80.

This sequence belongs to the calycin superfamily. Nitrophorin family. Requires heme b as cofactor. Salivary gland (at protein level).

It localises to the secreted. The enzyme catalyses 3 nitrite + 2 H(+) = 2 nitric oxide + nitrate + H2O. Heme-based protein that delivers nitric oxide gas (NO) to the victim while feeding, resulting in vasodilation and inhibition of platelet aggregation. Reversibly binds nitric oxide (NO). Also binds tightly to histamine, which is released by the host to induce wound healing. NO release is pH dependent and linked to loop dynamics. This Rhodnius prolixus (Triatomid bug) protein is Nitrophorin-4.